The following is a 137-amino-acid chain: Small ribosomal subunit protein uS12 (137 aa).

Residues 1-57 (MPTINQLVRKPRRAQVTKSKSPAMNVGYNSRKKVQTKLASPQKRGVATRVGTMTPKK) form a disordered region. A 3-methylthioaspartic acid modification is found at D102.

Belongs to the universal ribosomal protein uS12 family. As to quaternary structure, part of the 30S ribosomal subunit. Contacts proteins S8 and S17. May interact with IF1 in the 30S initiation complex.

Its function is as follows. With S4 and S5 plays an important role in translational accuracy. In terms of biological role, interacts with and stabilizes bases of the 16S rRNA that are involved in tRNA selection in the A site and with the mRNA backbone. Located at the interface of the 30S and 50S subunits, it traverses the body of the 30S subunit contacting proteins on the other side and probably holding the rRNA structure together. The combined cluster of proteins S8, S12 and S17 appears to hold together the shoulder and platform of the 30S subunit. This Lactococcus lactis subsp. lactis (strain IL1403) (Streptococcus lactis) protein is Small ribosomal subunit protein uS12.